Reading from the N-terminus, the 146-residue chain is Hemoglobin subunit beta (146 aa).

The Globin domain maps to 2–146; it reads FLTAEEKGLV…VANALAHKYH (145 aa). Position 44 is a phosphoserine (Ser-44). An N6-acetyllysine modification is found at Lys-59. Heme b is bound at residue His-63. Lys-82 carries the post-translational modification N6-acetyllysine. Position 92 (His-92) interacts with heme b. S-nitrosocysteine is present on Cys-93. N6-acetyllysine is present on Lys-144.

This sequence belongs to the globin family. Heterotetramer of two alpha chains and two beta chains. As to expression, red blood cells.

In terms of biological role, involved in oxygen transport from the lung to the various peripheral tissues. The chain is Hemoglobin subunit beta (HBB) from Lynx lynx (Eurasian lynx).